Consider the following 481-residue polypeptide: Ankyrin repeat, SAM and basic leucine zipper domain-containing protein 1 (481 aa).

Over residues 1–10 the composition is skewed to low complexity; sequence MASGALRGLA. Residues 1-23 are disordered; it reads MASGALRGLAVAGGGESSDSEDD. 3 positions are modified to phosphoserine: Ser17, Ser18, and Ser20. 6 ANK repeats span residues 45–74, 78–107, 110–144, 148–177, 181–210, and 214–243; these read EKSE…SVDS, YGWT…NASF, DKQT…DPNI, RLMT…EVNA, NGYT…NKML, and DGKI…PLEG. In terms of domain architecture, SAM spans 272–334; it reads SYTAFGDLEI…KILSALKELE (63 aa).

Interacts with DDX4, PIWIL1, RANBP9 and TDRD1.

It is found in the cytoplasm. Its function is as follows. Plays a central role during spermatogenesis by repressing transposable elements and preventing their mobilization, which is essential for the germline integrity. Acts via the piRNA metabolic process, which mediates the repression of transposable elements during meiosis by forming complexes composed of piRNAs and Piwi proteins and governs the methylation and subsequent repression of transposons. Its association with pi-bodies suggests a participation in the primary piRNAs metabolic process. Required prior to the pachytene stage to facilitate the production of multiple types of piRNAs, including those associated with repeats involved in the regulation of retrotransposons. May act by mediating protein-protein interactions during germ cell maturation. The sequence is that of Ankyrin repeat, SAM and basic leucine zipper domain-containing protein 1 (ASZ1) from Eulemur macaco macaco (Black lemur).